Here is a 225-residue protein sequence, read N- to C-terminus: Ribonuclease 3 (225 aa).

Positions M7–G132 constitute an RNase III domain. E45 contacts Mg(2+). Residue D49 is part of the active site. Residues D118 and E121 each contribute to the Mg(2+) site. Residue E121 is part of the active site. The 69-residue stretch at D157–D225 folds into the DRBM domain.

It belongs to the ribonuclease III family. Homodimer. Mg(2+) serves as cofactor.

Its subcellular location is the cytoplasm. The catalysed reaction is Endonucleolytic cleavage to 5'-phosphomonoester.. Functionally, digests double-stranded RNA. Involved in the processing of primary rRNA transcript to yield the immediate precursors to the large and small rRNAs (23S and 16S). Processes some mRNAs, and tRNAs when they are encoded in the rRNA operon. Processes pre-crRNA and tracrRNA of type II CRISPR loci if present in the organism. The chain is Ribonuclease 3 from Ruegeria pomeroyi (strain ATCC 700808 / DSM 15171 / DSS-3) (Silicibacter pomeroyi).